A 366-amino-acid chain; its full sequence is tRNA (guanine(26)-N(2))-dimethyltransferase (366 aa).

The disordered stretch occupies residues M1–F28. One can recognise a Trm1 methyltransferase domain in the interval M1–V365. S-adenosyl-L-methionine-binding residues include R37, R64, and D79. Zn(2+) is bound by residues C234, C237, C254, and C257.

Belongs to the class I-like SAM-binding methyltransferase superfamily. Trm1 family.

The enzyme catalyses guanosine(26) in tRNA + 2 S-adenosyl-L-methionine = N(2)-dimethylguanosine(26) in tRNA + 2 S-adenosyl-L-homocysteine + 2 H(+). Its function is as follows. Dimethylates a single guanine residue at position 26 of a number of tRNAs using S-adenosyl-L-methionine as donor of the methyl groups. In Natronomonas pharaonis (strain ATCC 35678 / DSM 2160 / CIP 103997 / JCM 8858 / NBRC 14720 / NCIMB 2260 / Gabara) (Halobacterium pharaonis), this protein is tRNA (guanine(26)-N(2))-dimethyltransferase.